Here is a 226-residue protein sequence, read N- to C-terminus: Deoxyribose-phosphate aldolase (226 aa).

Residue D95 is the Proton donor/acceptor of the active site. The active-site Schiff-base intermediate with acetaldehyde is the K157. Residue K186 is the Proton donor/acceptor of the active site.

The protein belongs to the DeoC/FbaB aldolase family. DeoC type 1 subfamily.

Its subcellular location is the cytoplasm. It carries out the reaction 2-deoxy-D-ribose 5-phosphate = D-glyceraldehyde 3-phosphate + acetaldehyde. It participates in carbohydrate degradation; 2-deoxy-D-ribose 1-phosphate degradation; D-glyceraldehyde 3-phosphate and acetaldehyde from 2-deoxy-alpha-D-ribose 1-phosphate: step 2/2. Its activity is regulated as follows. Partially inhibited by acetaldehyde. After incubation for 2, 4 and 6 hours in 300 mM acetaldehyde at 25 degrees Celsius, retains approximately 61.32%, 42.33% and 34.73% of the initial 2-deoxy-D-ribose-5-phosphate (DR5P) cleavage activity, respectively. Catalyzes a reversible aldol reaction between acetaldehyde and D-glyceraldehyde 3-phosphate to generate 2-deoxy-D-ribose 5-phosphate. Its function is as follows. In vitro, DERA can catalyze the aldol condensation of chloroacetaldehyde (CHAD) and acetaldehyde (ACD), yielding (S)-4-chloro-3-hydroxybutanal ((S)-CHB), which can combine with another aldehyde to form (3R,5S)-6-chloro-2,4,6-trideoxyhexapyranose (CTeHP), a key intermediate for statin drugs. The chain is Deoxyribose-phosphate aldolase from Pseudomonas syringae pv. syringae (strain B728a).